The sequence spans 355 residues: Uroporphyrinogen decarboxylase (355 aa).

Substrate-binding positions include 38–42, Asp87, Tyr162, Ser217, and His331; that span reads RQAGR.

It belongs to the uroporphyrinogen decarboxylase family. Homodimer.

Its subcellular location is the cytoplasm. It catalyses the reaction uroporphyrinogen III + 4 H(+) = coproporphyrinogen III + 4 CO2. Its pathway is porphyrin-containing compound metabolism; protoporphyrin-IX biosynthesis; coproporphyrinogen-III from 5-aminolevulinate: step 4/4. Catalyzes the decarboxylation of four acetate groups of uroporphyrinogen-III to yield coproporphyrinogen-III. In Streptomyces avermitilis (strain ATCC 31267 / DSM 46492 / JCM 5070 / NBRC 14893 / NCIMB 12804 / NRRL 8165 / MA-4680), this protein is Uroporphyrinogen decarboxylase.